A 135-amino-acid chain; its full sequence is Large-conductance mechanosensitive channel (135 aa).

2 helical membrane-spanning segments follow: residues 10–30 and 76–96; these read FAMR…GAFG and GSFI…FCVI.

It belongs to the MscL family. Homopentamer.

It is found in the cell inner membrane. Channel that opens in response to stretch forces in the membrane lipid bilayer. May participate in the regulation of osmotic pressure changes within the cell. The protein is Large-conductance mechanosensitive channel of Campylobacter concisus (strain 13826).